The following is a 504-amino-acid chain: Glutamate--tRNA ligase (504 aa).

A 'HIGH' region motif is present at residues 25-35; it reads PSPTGNPHVGL. Zn(2+) is bound by residues C122, C124, C149, and E151. Residues 270–274 carry the 'KMSKS' region motif; that stretch reads KLSKR. An ATP-binding site is contributed by K273.

The protein belongs to the class-I aminoacyl-tRNA synthetase family. Glutamate--tRNA ligase type 1 subfamily. Monomer. The cofactor is Zn(2+).

Its subcellular location is the cytoplasm. It carries out the reaction tRNA(Glu) + L-glutamate + ATP = L-glutamyl-tRNA(Glu) + AMP + diphosphate. Its function is as follows. Catalyzes the attachment of glutamate to tRNA(Glu) in a two-step reaction: glutamate is first activated by ATP to form Glu-AMP and then transferred to the acceptor end of tRNA(Glu). The polypeptide is Glutamate--tRNA ligase (Streptomyces avermitilis (strain ATCC 31267 / DSM 46492 / JCM 5070 / NBRC 14893 / NCIMB 12804 / NRRL 8165 / MA-4680)).